The following is a 257-amino-acid chain: Phycoerythrobilin:ferredoxin oxidoreductase (257 aa).

Belongs to the HY2 family.

The enzyme catalyses (3Z)-phycoerythrobilin + oxidized 2[4Fe-4S]-[ferredoxin] = 15,16-dihydrobiliverdin + reduced 2[4Fe-4S]-[ferredoxin] + 2 H(+). Functionally, catalyzes the two-electron reduction of the C2 and C3(1) diene system of 15,16-dihydrobiliverdin. In Synechococcus sp. (strain CC9902), this protein is Phycoerythrobilin:ferredoxin oxidoreductase.